Reading from the N-terminus, the 305-residue chain is Homoserine O-acetyltransferase (305 aa).

Catalysis depends on Cys142, which acts as the Acyl-thioester intermediate. Substrate-binding residues include Lys163 and Ser192. His235 functions as the Proton acceptor in the catalytic mechanism. Glu237 is an active-site residue. Arg249 is a substrate binding site.

It belongs to the MetA family.

The protein resides in the cytoplasm. It carries out the reaction L-homoserine + acetyl-CoA = O-acetyl-L-homoserine + CoA. Its pathway is amino-acid biosynthesis; L-methionine biosynthesis via de novo pathway; O-acetyl-L-homoserine from L-homoserine: step 1/1. Transfers an acetyl group from acetyl-CoA to L-homoserine, forming acetyl-L-homoserine. In Phocaeicola vulgatus (strain ATCC 8482 / DSM 1447 / JCM 5826 / CCUG 4940 / NBRC 14291 / NCTC 11154) (Bacteroides vulgatus), this protein is Homoserine O-acetyltransferase.